Reading from the N-terminus, the 115-residue chain is NADH-ubiquinone oxidoreductase chain 3 (115 aa).

The next 3 membrane-spanning stretches (helical) occupy residues 5–25 (LTFMTDVILALLLVMIAFWLP), 55–75 (FFLVAITFLLFDLEIALLLPL), and 86–106 (LMLTMALLLISILAAGLAYEW).

This sequence belongs to the complex I subunit 3 family. Core subunit of respiratory chain NADH dehydrogenase (Complex I) which is composed of 45 different subunits. Interacts with TMEM186. Interacts with TMEM242.

It is found in the mitochondrion inner membrane. It catalyses the reaction a ubiquinone + NADH + 5 H(+)(in) = a ubiquinol + NAD(+) + 4 H(+)(out). Its function is as follows. Core subunit of the mitochondrial membrane respiratory chain NADH dehydrogenase (Complex I) which catalyzes electron transfer from NADH through the respiratory chain, using ubiquinone as an electron acceptor. Essential for the catalytic activity of complex I. The chain is NADH-ubiquinone oxidoreductase chain 3 from Avahi unicolor (Sambirano woolly lemur).